A 78-amino-acid polypeptide reads, in one-letter code: Gas vesicle protein G (78 aa).

The protein belongs to the gas vesicle GvpG family.

Its subcellular location is the gas vesicle. In terms of biological role, might be a minor component of the gas vesicle involved in nucleating their formation. Gas vesicles are hollow, gas filled proteinaceous nanostructures found in some microorganisms. It is not clear what function gas vesicles perform in soil bacteria. This is Gas vesicle protein G from Streptomyces sp. (strain CB03234).